We begin with the raw amino-acid sequence, 286 residues long: tRNA (guanine-N(7)-)-methyltransferase (286 aa).

Residues Gly-91, 114 to 115 (EI), 158 to 159 (NS), and Leu-178 each bind S-adenosyl-L-methionine. Asp-181 is a catalytic residue. Position 256-258 (256-258 (TEE)) interacts with S-adenosyl-L-methionine.

Belongs to the class I-like SAM-binding methyltransferase superfamily. TrmB family. As to quaternary structure, forms a complex with TRM82.

The protein localises to the nucleus. It catalyses the reaction guanosine(46) in tRNA + S-adenosyl-L-methionine = N(7)-methylguanosine(46) in tRNA + S-adenosyl-L-homocysteine. It participates in tRNA modification; N(7)-methylguanine-tRNA biosynthesis. Functionally, catalyzes the formation of N(7)-methylguanine at position 46 (m7G46) in tRNA. The protein is tRNA (guanine-N(7)-)-methyltransferase of Cryptococcus neoformans var. neoformans serotype D (strain B-3501A) (Filobasidiella neoformans).